Reading from the N-terminus, the 258-residue chain is Peptide methionine sulfoxide reductase A4, chloroplastic (258 aa).

The N-terminal 53 residues, 1–53 (MQVLVVSPPLIAAASLSKPLNSLSKAALSFSRAKPICPFPQTSRRPISVYKSP), are a transit peptide targeting the chloroplast. Position 54 is an N-acetylmethionine (methionine 54). Residues 62–89 (GFGSRPQAQADPSSAAIAQGPDDDVPSS) are disordered. Serine 245 carries the phosphoserine modification.

It belongs to the MsrA Met sulfoxide reductase family. Expressed in rosette and cauline leaves, and at lower levels in stems and flowers (at protein level).

It is found in the plastid. It localises to the chloroplast stroma. The enzyme catalyses L-methionyl-[protein] + [thioredoxin]-disulfide + H2O = L-methionyl-(S)-S-oxide-[protein] + [thioredoxin]-dithiol. It carries out the reaction [thioredoxin]-disulfide + L-methionine + H2O = L-methionine (S)-S-oxide + [thioredoxin]-dithiol. In terms of biological role, catalyzes the reduction of methionine sulfoxide (MetSO) to methionine in proteins. Plays a protective role against oxidative stress by restoring activity to proteins that have been inactivated by methionine oxidation. Prevents the methionine sulfoxidation of the heat shock protein HSP21 and its subsequent inactivation. MSRA family specifically reduces the MetSO S-enantiomer. The protein is Peptide methionine sulfoxide reductase A4, chloroplastic (MSR4) of Arabidopsis thaliana (Mouse-ear cress).